The sequence spans 1085 residues: Ankyrin repeat and IBR domain-containing protein 1 (1085 aa).

Residue G2 is the site of N-myristoyl glycine attachment. 2 ANK repeats span residues Q45–K75 and K145–A174. A disordered region spans residues C282 to I322. Positions P304–P319 are enriched in low complexity. The tract at residues D330–E570 is TRIAD supradomain. 14 residues coordinate Zn(2+): C334, C337, C352, H354, C357, C360, C379, C384, C466, C469, H474, C479, C520, and C523. The RING-type 1 zinc finger occupies C334–C384. Residues D402–C479 form an IBR-type zinc finger. The RING-type 2; atypical zinc-finger motif lies at C520–C549. Residue C533 is part of the active site. The Zn(2+) site is built by C538, C541, C546, C549, H556, and C566. Positions E576–C641 form a coiled coil. S738 bears the Phosphoserine mark. The interval R764 to S808 is disordered. The UIM domain occupies E846–D865. S879 and S906 each carry phosphoserine. 3 disordered regions span residues G884–S907, G921–S959, and P1014–V1085. A compositionally biased stretch (polar residues) spans P926–S959. Basic and acidic residues predominate over residues S1018–M1033. Polar residues predominate over residues A1068–V1085.

This sequence belongs to the RBR family.

It carries out the reaction [E2 ubiquitin-conjugating enzyme]-S-ubiquitinyl-L-cysteine + [acceptor protein]-L-lysine = [E2 ubiquitin-conjugating enzyme]-L-cysteine + [acceptor protein]-N(6)-ubiquitinyl-L-lysine.. In terms of biological role, might act as an E3 ubiquitin-protein ligase, or as part of E3 complex, which accepts ubiquitin from specific E2 ubiquitin-conjugating enzymes and then transfers it to substrates. This Mus musculus (Mouse) protein is Ankyrin repeat and IBR domain-containing protein 1 (Ankib1).